Reading from the N-terminus, the 332-residue chain is UBA domain-containing protein Mud1 (332 aa).

Residue Asp-127 is part of the active site. The segment at 246–298 is disordered; it reads GLGIEPASKASASSPNPQSGTRLGTKESVAPNNEGSSNPPSLVNPPTDPGLNS. Over residues 251 to 264 the composition is skewed to low complexity; it reads PASKASASSPNPQS. Positions 275–286 are enriched in polar residues; the sequence is APNNEGSSNPPS. One can recognise a UBA domain in the interval 291–332; it reads PTDPGLNSKIAQLVSMGFDPLEAAQALDAANGDLDVAASFLL.

The protein belongs to the DDI1 family. As to quaternary structure, homodimer. Interacts (via UBA domain) with polyubiquitin (polyUb) chains (via Lys-48-linked polyUbs). Has weak binding affinity for monoubiquitin. According to another report, has no affinity for monoubiquitin.

It is found in the cytoplasm. The protein localises to the cell membrane. Recognizes and binds polyubiquitin chains. Acts as a linker between the 19S proteasome and polyubiquitinated proteins via UBA domain interactions with ubiquitin for their subsequent degradation. Aspartic protease. Appears to act as negative regulator of constitutive exocytosis. May act at the level of secretory vesicle docking and fusion as a competitive inhibitor of SNARE assembly. Required for S-phase checkpoint control. The sequence is that of UBA domain-containing protein Mud1 from Schizosaccharomyces pombe (strain 972 / ATCC 24843) (Fission yeast).